Here is a 514-residue protein sequence, read N- to C-terminus: Sugar transport protein 4 (514 aa).

Over M1–K22 the chain is Cytoplasmic. Transmembrane regions (helical) follow at residues V23–I43, L80–S100, F117–I137, I140–M160, G172–A192, I202–P222, L283–F303, L321–V341, I348–I368, L387–G407, I426–L446, and F451–M471. At L472 to V514 the chain is on the cytoplasmic side.

It belongs to the major facilitator superfamily. Sugar transporter (TC 2.A.1.1) family. As to expression, mostly in flowers and roots, especially in anthers, including pollen, and root tips. Also present in some hydathodes.

The protein localises to the cell membrane. In terms of biological role, mediates an active uptake of hexoses, probably by sugar/hydrogen symport. Can transport glucose, methylglucose, galactose, xylose and mannose, but not fructose. This chain is Sugar transport protein 4 (STP4), found in Arabidopsis thaliana (Mouse-ear cress).